We begin with the raw amino-acid sequence, 131 residues long: Small ribosomal subunit protein uS11 (131 aa).

The protein belongs to the universal ribosomal protein uS11 family. As to quaternary structure, part of the 30S ribosomal subunit. Interacts with proteins S7 and S18. Binds to IF-3.

Its function is as follows. Located on the platform of the 30S subunit, it bridges several disparate RNA helices of the 16S rRNA. Forms part of the Shine-Dalgarno cleft in the 70S ribosome. The sequence is that of Small ribosomal subunit protein uS11 from Neisseria gonorrhoeae (strain ATCC 700825 / FA 1090).